The chain runs to 62 residues: DNA-directed RNA polymerase subunit Rpo10 (62 aa).

Cys6, Cys9, Cys43, and Cys44 together coordinate Zn(2+).

Belongs to the archaeal Rpo10/eukaryotic RPB10 RNA polymerase subunit family. Part of the RNA polymerase complex. The cofactor is Zn(2+).

It localises to the cytoplasm. It catalyses the reaction RNA(n) + a ribonucleoside 5'-triphosphate = RNA(n+1) + diphosphate. Its function is as follows. DNA-dependent RNA polymerase (RNAP) catalyzes the transcription of DNA into RNA using the four ribonucleoside triphosphates as substrates. The protein is DNA-directed RNA polymerase subunit Rpo10 of Methanoculleus marisnigri (strain ATCC 35101 / DSM 1498 / JR1).